We begin with the raw amino-acid sequence, 72 residues long: Sperm protein associated with the nucleus on the X chromosome N1 (72 aa).

A disordered region spans residues 1 to 40 (MEKPTSSTNGEKRKSPCDSNNKNDEMQETPNRDLVLEPSL). Positions 10–35 (GEKRKSPCDSNNKNDEMQETPNRDLV) are enriched in basic and acidic residues.

This sequence belongs to the SPAN-X family.

This Gorilla gorilla gorilla (Western lowland gorilla) protein is Sperm protein associated with the nucleus on the X chromosome N1 (SPANXN1).